Consider the following 539-residue polypeptide: Neutral amino acid transporter B(0) (539 aa).

Methionine 1 bears the N-acetylmethionine mark. Residues 1–52 (MVADPPKGDPKGYAAAEPTANGVSMLVPIEDVGSLKGGRCGSGDQVRRCLRA) are Cytoplasmic-facing. Residues 53–82 (NLLVLLTVVAVVAGVALGLGVSGAGGAFAL) traverse the membrane as a helical segment. At 83-95 (GPARLEAFSFPGE) the chain is on the extracellular side. The chain crosses the membrane as a helical span at residues 96–117 (LLLRLLKMIILPLVVCSLIGGA). Residues 118 to 131 (ASLDPSALGRLGAW) lie on the Cytoplasmic side of the membrane. Residues 132-154 (ALLFFLVTTLLASALGVGLALAL) form a helical membrane-spanning segment. Residues 155–223 (QPGAAFAAIN…GTLVKVPTGG (69 aa)) lie on the Extracellular side of the membrane. 2 N-linked (GlcNAc...) asparagine glycosylation sites follow: asparagine 164 and asparagine 213. The chain crosses the membrane as a helical span at residues 224-247 (EVEGMNILGLVVFAIIFGVALRKL). Residues 248-256 (GPEGELLIR) are Cytoplasmic-facing. Residues 257-284 (FFNSFNDATMVLVSWIMWYAPVGILFLV) form a helical membrane-spanning segment. Residues 285 to 305 (AGKIVEMENVGLLFASLGKYI) are Extracellular-facing. Residues 306–327 (LCCLLGHAIHGLLTLPLIYFLF) traverse the membrane as a helical segment. Residues 328 to 332 (ARKNP) are Cytoplasmic-facing. Residues 333–363 (YRFLWGIMTPLATAFGTSSSSATLPLMMKCV) constitute an intramembrane region (discontinuously helical). Residues 364-372 (EEKNGVARH) are Cytoplasmic-facing. Residues 373–399 (ISRFILPIGATVNMDGAALFQCVAAVF) form a helical membrane-spanning segment. The Na(+) site is built by glycine 381, threonine 383, and asparagine 385. Residues 400-412 (IAQLNHRSLDFVK) lie on the Extracellular side of the membrane. The segment at residues 413–446 (IITILVTATASSVGAAGIPSGGVLTLAIILEAVN) is an intramembrane region (discontinuously helical). Over 447 to 459 (LPVHDISLILAVD) the chain is Extracellular. A helical membrane pass occupies residues 460–481 (WLVDRSCTVLNVEGDAFGAGLL). Asparagine 470 and aspartate 474 together coordinate Na(+). Residues 482–539 (QSYLDRTENCNSVPELIQVKSEMPLAALPVPGEEGNPLLKGCPGPAGDADTCEKESVM) lie on the Cytoplasmic side of the membrane. Serine 493, serine 502, and serine 537 each carry phosphoserine. The tract at residues 518 to 539 (PLLKGCPGPAGDADTCEKESVM) is disordered.

Belongs to the dicarboxylate/amino acid:cation symporter (DAACS) (TC 2.A.23) family. SLC1A5 subfamily. Homotrimer.

The protein resides in the cell membrane. It localises to the melanosome. The catalysed reaction is L-glutamine(out) + L-serine(in) + Na(+)(out) = L-glutamine(in) + L-serine(out) + Na(+)(in). It carries out the reaction L-glutamine(in) + L-serine(out) + Na(+)(out) = L-glutamine(out) + L-serine(in) + Na(+)(in). It catalyses the reaction L-threonine(in) + L-glutamine(out) + Na(+)(out) = L-threonine(out) + L-glutamine(in) + Na(+)(in). The enzyme catalyses L-threonine(out) + L-glutamine(in) + Na(+)(out) = L-threonine(in) + L-glutamine(out) + Na(+)(in). The catalysed reaction is L-asparagine(in) + L-glutamine(out) + Na(+)(out) = L-asparagine(out) + L-glutamine(in) + Na(+)(in). It carries out the reaction L-asparagine(out) + L-glutamine(in) + Na(+)(out) = L-asparagine(in) + L-glutamine(out) + Na(+)(in). It catalyses the reaction L-glutamine(in) + L-alanine(out) + Na(+)(out) = L-glutamine(out) + L-alanine(in) + Na(+)(in). The enzyme catalyses L-valine(out) + L-glutamine(in) + Na(+)(out) = L-valine(in) + L-glutamine(out) + Na(+)(in). The catalysed reaction is L-glutamine(in) + L-methionine(out) + Na(+)(out) = L-glutamine(out) + L-methionine(in) + Na(+)(in). It carries out the reaction L-glutamine(in) + L-glutamate(out) + Na(+)(out) + H(+)(out) = L-glutamine(out) + L-glutamate(in) + Na(+)(in) + H(+)(in). It catalyses the reaction D-serine(in) + L-glutamine(out) + Na(+)(out) = D-serine(out) + L-glutamine(in) + Na(+)(in). The enzyme catalyses D-serine(in) + L-alanine(out) + Na(+)(out) = D-serine(out) + L-alanine(in) + Na(+)(in). The catalysed reaction is nitrate(in) = nitrate(out). It carries out the reaction iodide(out) = iodide(in). It catalyses the reaction thiocyanate(in) = thiocyanate(out). Functionally, sodium-coupled antiporter of neutral amino acids. In a tri-substrate transport cycle, exchanges neutral amino acids between the extracellular and intracellular compartments, coupled to the inward cotransport of at least one sodium ion. The preferred substrate is the essential amino acid L-glutamine, a precursor for biosynthesis of proteins, nucleotides and amine sugars as well as an alternative fuel for mitochondrial oxidative phosphorylation. Exchanges L-glutamine with other neutral amino acids such as L-serine, L-threonine and L-asparagine in a bidirectional way. Provides L-glutamine to proliferating stem and activated cells driving the metabolic switch toward cell differentiation. The transport cycle is usually pH-independent, with the exception of L-glutamate. Transports extracellular L-glutamate coupled to the cotransport of one proton and one sodium ion in exchange for intracellular L-glutamine counter-ion. May provide for L-glutamate uptake in glial cells regulating glutamine/glutamate cycle in the nervous system. Can transport D-amino acids. Mediates D-serine release from the retinal glia potentially affecting NMDA receptor function in retinal neurons. Displays sodium- and amino acid-dependent but uncoupled channel-like anion conductance with a preference SCN(-) &gt;&gt; NO3(-) &gt; I(-) &gt; Cl(-). Through binding of the fusogenic protein syncytin-1/ERVW-1 may mediate trophoblasts syncytialization, the spontaneous fusion of their plasma membranes, an essential process in placental development. The protein is Neutral amino acid transporter B(0) (SLC1A5) of Bos taurus (Bovine).